The chain runs to 312 residues: tRNA dimethylallyltransferase (312 aa).

18-25 (GPTASGKS) provides a ligand contact to ATP. 20–25 (TASGKS) provides a ligand contact to substrate. Interaction with substrate tRNA stretches follow at residues 43–46 (DSMQ) and 167–171 (QRILR).

The protein belongs to the IPP transferase family. As to quaternary structure, monomer. The cofactor is Mg(2+).

The enzyme catalyses adenosine(37) in tRNA + dimethylallyl diphosphate = N(6)-dimethylallyladenosine(37) in tRNA + diphosphate. Its function is as follows. Catalyzes the transfer of a dimethylallyl group onto the adenine at position 37 in tRNAs that read codons beginning with uridine, leading to the formation of N6-(dimethylallyl)adenosine (i(6)A). The polypeptide is tRNA dimethylallyltransferase (Azorhizobium caulinodans (strain ATCC 43989 / DSM 5975 / JCM 20966 / LMG 6465 / NBRC 14845 / NCIMB 13405 / ORS 571)).